Consider the following 569-residue polypeptide: Formate--tetrahydrofolate ligase (569 aa).

68-75 contacts ATP; the sequence is TPAGEGKT.

Belongs to the formate--tetrahydrofolate ligase family.

The enzyme catalyses (6S)-5,6,7,8-tetrahydrofolate + formate + ATP = (6R)-10-formyltetrahydrofolate + ADP + phosphate. Its pathway is one-carbon metabolism; tetrahydrofolate interconversion. The chain is Formate--tetrahydrofolate ligase from Psychrobacter sp. (strain PRwf-1).